The primary structure comprises 3033 residues: Genome polyprotein (3033 aa).

The residue at position 2 (Ser-2) is an N-acetylserine; by host. Residues Ser-2–Lys-23 form an interaction with STAT1 region. The interval Ser-2–Pro-58 is interaction with EIF2AK2/PKR. The interval Ser-2 to Arg-59 is interaction with DDX3X. The segment at Ser-2–Ser-75 is disordered. The Cytoplasmic segment spans residues Ser-2–Asn-168. 2 short sequence motifs (nuclear localization signal) span residues Pro-5–Arg-13 and Pro-38–Arg-43. Positions Pro-7–Asn-16 are enriched in basic residues. Over residues Gly-32 to Arg-47 the composition is skewed to low complexity. Ser-53 is modified (phosphoserine; by host). 2 consecutive short sequence motifs (nuclear localization signal) follow at residues Pro-58–Pro-64 and Pro-66–Ser-71. Ser-99 is modified (phosphoserine; by host). The interval Pro-112–Ala-152 is important for endoplasmic reticulum and mitochondrial localization. Phosphoserine; by host PKA is present on Ser-116. An interaction with APOA2 region spans residues Val-122 to Ser-173. The tract at residues Phe-164–Gly-167 is important for lipid droplets localization. The chain crosses the membrane as a helical span at residues Leu-169–Val-189. Positions Leu-178 to Ala-191 are cleaved as a propeptide — ER anchor for the core protein, removed in mature form by host signal peptidase. Topologically, residues Ser-190–Gly-358 are lumenal. 3 N-linked (GlcNAc...) asparagine; by host glycosylation sites follow: Asn-196, Asn-209, and Asn-234. An important for fusion region spans residues Val-265–Gln-296. Asn-305 carries N-linked (GlcNAc...) asparagine; by host glycosylation. Residues Leu-359–Ala-379 form a helical membrane-spanning segment. Topologically, residues Gly-380–Leu-729 are lumenal. The HVR1 stretch occupies residues Thr-385 to Ile-411. N-linked (GlcNAc...) (high mannose) asparagine; by host glycans are attached at residues Asn-417, Asn-423, Asn-430, and Asn-448. Disulfide bonds link Cys-429/Cys-554, Cys-452/Cys-459, Cys-488/Cys-496, and Cys-505/Cys-510. Residue Asn-477 is glycosylated (N-linked (GlcNAc...) (high mannose) asparagine; by host). The segment at Met-484 to Cys-496 is CD81-binding 1. The tract at residues Leu-524–Thr-555 is CD81-binding 2. N-linked (GlcNAc...) (high mannose) asparagine; by host glycosylation is found at Asn-534, Asn-542, and Asn-558. Cys-566 and Cys-571 are disulfide-bonded. Asn-578 carries N-linked (GlcNAc...) (high mannose) asparagine; by host glycosylation. Intrachain disulfides connect Cys-585–Cys-589, Cys-601–Cys-624, and Cys-611–Cys-648. N-linked (GlcNAc...) (high mannose) asparagine; by host glycans are attached at residues Asn-627 and Asn-649. Cys-656 and Cys-681 are oxidised to a cystine. The EIF2AK2/eIF2-alpha phosphorylation homology domain (PePHD) stretch occupies residues Ser-664 to Glu-675. Residues Leu-730–Ala-750 form a helical membrane-spanning segment. Topologically, residues Ala-751–Ala-761 are lumenal. A helical transmembrane segment spans residues Ser-762 to Ile-782. Topologically, residues Lys-783–Val-786 are cytoplasmic. Residues Val-787–Leu-807 traverse the membrane as a helical segment. At Pro-808–Ser-817 the chain is on the lumenal side. A helical transmembrane segment spans residues Val-818–Gly-838. The Cytoplasmic segment spans residues Tyr-839 to Cys-885. A helical transmembrane segment spans residues Pro-886–Leu-906. The Lumenal segment spans residues Lys-907 to Leu-932. Positions Lys-907–Leu-1030 constitute a Peptidase C18 domain. The segment at Gly-908 to Arg-1210 is protease NS2-3. Residue Cys-926 is the site of S-palmitoyl cysteine; by host attachment. A helical membrane pass occupies residues Ala-933–Ile-953. The interaction with host SCPS1 stretch occupies residues Ala-933 to Ile-953. At Tyr-954–Thr-1661 the chain is on the cytoplasmic side. Active-site for protease NS2 activity; shared with dimeric partner residues include His-956, Glu-976, and Cys-997. The region spanning Ala-1031–Pro-1212 is the Peptidase S29 domain. Residues His-1087 and Asp-1111 each act as charge relay system; for serine protease NS3 activity in the active site. The Zn(2+) site is built by Cys-1127 and Cys-1129. Catalysis depends on Ser-1169, which acts as the Charge relay system; for serine protease NS3 activity. Zn(2+) is bound by residues Cys-1175 and His-1179. The 153-residue stretch at Pro-1221–Gln-1373 folds into the Helicase ATP-binding domain. Ala-1234 to Ser-1241 contributes to the ATP binding site. Mg(2+) contacts are provided by Ser-1241 and Glu-1321. The DECH box motif lies at Asp-1320 to His-1323. The tract at residues Gln-1490 to Gly-1501 is RNA-binding. Residues Ser-1662–Gly-1682 form a helical membrane-spanning segment. The interval Cys-1683–Gln-1694 is NS3-binding. At Cys-1683 to Thr-1809 the chain is on the cytoplasmic side. The helical transmembrane segment at Thr-1810–Ala-1830 threads the bilayer. Residues Thr-1831–Gly-1832 lie on the Lumenal side of the membrane. A helical transmembrane segment spans residues Phe-1833–Val-1853. The tract at residues Gly-1837–Gly-1865 is glycine zipper. Asp-1854 is a topological domain (cytoplasmic). A helical transmembrane segment spans residues Ile-1855–Gly-1875. The Lumenal segment spans residues Glu-1876–Asn-1885. The chain crosses the membrane as a helical span at residues Leu-1886–Leu-1906. Residues Arg-1907–Cys-1976 lie on the Cytoplasmic side of the membrane. Cys-1972 carries the S-palmitoyl cysteine; by host lipid modification. Cys-1976 is lipidated: S-palmitoyl cysteine; by host; partial. An intramembrane segment occupies Ser-1977–Met-2007. The tract at residues Arg-1982–Lys-2002 is membrane-binding. Residues Pro-2008–Arg-3012 lie on the Cytoplasmic side of the membrane. Residues Gly-2009–Ala-2225 form an RNA-binding region. Cys-2015, Cys-2033, Cys-2035, and Cys-2056 together coordinate Zn(2+). Tyr-2069 is subject to Phosphotyrosine; by host. The tract at residues Glu-2124–Ala-2212 is FKBP8-binding. Residues Glu-2124–Thr-2332 are transcriptional activation. Residues Pro-2139–Pro-2143 form an interaction with non-structural protein 4A region. Disordered regions lie at residues Arg-2193–Ser-2214 and Ala-2309–Leu-2335. Position 2198 is a phosphoserine; by host; in p56 (Ser-2198). Residues Ser-2198–Ser-2214 show a composition bias toward low complexity. Residue Ser-2201 is modified to Phosphoserine; by host; in p58. Phosphoserine; by host; in p56 and p58, regulates intracellular NS5A distribution is present on Ser-2205. Ser-2208, Ser-2211, and Ser-2214 each carry phosphoserine; by host; in p58. An ISDR region spans residues Leu-2210 to Lys-2249. Residues Ser-2214 to Met-2275 are interaction with EIF2AK2/PKR. The segment at Leu-2253–Thr-2310 is NS4B-binding. Residues Leu-2316–Pro-2326 show a composition bias toward pro residues. An SH3-binding motif is present at residues Thr-2322 to Pro-2325. Thr-2324 bears the Phosphothreonine; by host mark. The Nuclear localization signal motif lies at Pro-2326 to Gly-2334. Residues Ser-2336–Ser-2447 form an interaction with host IFI27 region. Residue Lys-2350 forms a Glycyl lysine isopeptide (Lys-Gly) (interchain with G-Cter in ubiquitin) linkage. The disordered stretch occupies residues Ser-2351–Thr-2431. Residues Ser-2358–Leu-2381 are V3. Residues Glu-2398–Gln-2408 show a composition bias toward acidic residues. Residues Gly-2417–Thr-2431 are compositionally biased toward low complexity. A RdRp catalytic domain is found at Pro-2656–Asp-2774. Mg(2+) is bound by residues Asp-2662, Asp-2760, and Asp-2761. A helical membrane pass occupies residues Leu-3013–Arg-3033.

This sequence belongs to the hepacivirus polyprotein family. In terms of assembly, homooligomer. Interacts with E1 (via C-terminus). Interacts with the non-structural protein 5A. Interacts (via N-terminus) with host STAT1 (via SH2 domain); this interaction results in decreased STAT1 phosphorylation and ubiquitin-mediated proteasome-dependent STAT1 degradation, leading to decreased IFN-stimulated gene transcription. Interacts with host STAT3; this interaction constitutively activates STAT3. Interacts with host LTBR receptor. Interacts with host TNFRSF1A receptor and possibly induces apoptosis. Interacts with host HNRPK. Interacts with host YWHAE. Interacts with host UBE3A/E6AP. Interacts with host DDX3X. Interacts with host APOA2. Interacts with host RXRA protein. Interacts with host SP110 isoform 3/Sp110b; this interaction sequesters the transcriptional corepressor SP110 away from the nucleus. Interacts with host CREB3 nuclear transcription protein; this interaction triggers cell transformation. Interacts with host ACY3. Interacts with host C1QR1. Interacts with host RBM24; this interaction, which enhances the interaction of the mature core protein with 5'-UTR, may inhibit viral translation and favor replication. Interacts with host EIF2AK2/PKR; this interaction induces the autophosphorylation of EIF2AK2. Part of the viral assembly initiation complex composed of NS2, E1, E2, NS3, NS4A, NS5A and the mature core protein. As to quaternary structure, forms a heterodimer with envelope glycoprotein E2. Interacts with mature core protein. Interacts with protease NS2. The heterodimer E1/E2 interacts with host CLDN1; this interaction plays a role in viral entry into host cell. Interacts with host SPSB2 (via C-terminus). Part of the viral assembly initiation complex composed of NS2, E1, E2, NS3, NS4A, NS5A and the mature core protein. Interacts with host NEURL3; this interaction prevents E1 binding to glycoprotein E2. Forms a heterodimer with envelope glycoprotein E1. Interacts with host CD81 and SCARB1 receptors; this interaction may play a role in viral entry into host cell. Interacts with host EIF2AK2/PKR; this interaction inhibits EIF2AK2 and probably allows the virus to evade the innate immune response. Interacts with host CD209/DC-SIGN and CLEC4M/DC-SIGNR. Interact with host SPCS1; this interaction is essential for viral particle assembly. Interacts with protease NS2. The heterodimer E1/E2 interacts with host CLDN1; this interaction plays a role in viral entry into host cell. Part of the viral assembly initiation complex composed of NS2, E1, E2, NS3, NS4A, NS5A and the mature core protein. Interacts with host SLC3A2/4F2hc; the interaction may facilitate viral entry into host cell. Interacts with human PLSCR1. In terms of assembly, homohexamer. Homoheptamer. Interacts with protease NS2. As to quaternary structure, homodimer. Interacts with host SPCS1; this interaction is essential for viral particle assembly. Interacts with envelope glycoprotein E1. Interacts with envelope glycoprotein E2. Interacts with viroporin p7. Interacts with serine protease/helicase NS3. Part of the replication complex composed of NS2, NS3, NS4A, NS4B, NS5A and the RNA-directed RNA polymerase embedded in an ER-derived membranous web. Part of the viral assembly initiation complex composed of NS2, E1, E2, NS3, NS4A, NS5A and the mature core protein. Interacts with protease NS2. Interacts with non-structural protein 4A; this interaction stabilizes the folding of NS3 serine protease. NS3-NS4A interaction is essential for NS3 activation and allows membrane anchorage of the latter. NS3/NS4A complex also prevents phosphorylation of host IRF3, thus preventing the establishment of dsRNA induced antiviral state. Interacts with host MAVS; this interaction leads to the cleavage and inhibition of host MAVS. Interacts with host TICAM1; this interaction leads to the cleavage and inhibition of host TICAM1. Interacts with host TANK-binding kinase/TBK1; this interaction results in the inhibition of the association between TBK1 and IRF3, which leads to the inhibition of IRF3 activation. Interacts with host RBM24. Part of the replication complex composed of NS2, NS3, NS4A, NS4B, NS5A and the RNA-directed RNA polymerase embedded in an ER-derived membranous web. Part of the viral assembly initiation complex composed of NS2, E1, E2, NS3, NS4A, NS5A and the mature core protein. In terms of assembly, interacts with NS3 serine protease; this interaction stabilizes the folding of NS3 serine protease. NS3-NS4A interaction is essential for NS3 activation and allows membrane anchorage of the latter. Interacts with non-structural protein 5A (via N-terminus). Part of the replication complex composed of NS2, NS3, NS4A, NS4B, NS5A and the RNA-directed RNA polymerase embedded in an ER-derived membranous web. Part of the viral assembly initiation complex composed of NS2, E1, E2, NS3, NS4A, NS5A and the mature core protein. As to quaternary structure, homomultimer. Interacts with non-structural protein NS5A. Interacts with host PLA2G4C; this interaction likely initiates the recruitment of replication complexes to lipid droplets. Interacts with host STING; this interaction disrupts the interaction between STING and TBK1 thereby suppressing the interferon signaling. Part of the replication complex composed of NS2, NS3, NS4A, NS4B, NS5A and the RNA-directed RNA polymerase embedded in an ER-derived membranous web. Monomer. Homodimer; dimerization is required for RNA-binding. Interacts with the mature core protein. Interacts (via N-terminus) with non-structural protein 4A. Interacts with non-structural protein 4B. Interacts (via region D2) with RNA-directed RNA polymerase. Part of the viral assembly initiation complex composed of NS2, E1, E2, NS3, NS4A, NS5A and the mature core protein. Part of the replication complex composed of NS2, NS3, NS4A, NS4B, NS5A and the RNA-directed RNA polymerase embedded in an ER-derived membranous web. Interacts with host GRB2. Interacts with host BIN1. Interacts with host PIK3R1. Interacts with host SRCAP. Interacts with host FKBP8. Interacts (via C-terminus) with host VAPB (via MSP domain). Interacts with host EIF2AK2/PKR; this interaction leads to disruption of EIF2AK2 dimerization by NS5A and probably allows the virus to evade the innate immune response. Interacts (via N-terminus) with host PACSIN2 (via N-terminus); this interaction attenuates protein kinase C alpha-mediated phosphorylation of PACSIN2 by disrupting the interaction between PACSIN2 and PRKCA. Interacts (via N-terminus) with host SRC kinase (via SH2 domain). Interacts with most Src-family kinases. Interacts with host IFI27 and SKP2; promotes the ubiquitin-mediated proteasomal degradation of NS5A. Interacts with host GPS2. Interacts with host TNFRSF21; this interaction allows the modulation by the virus of JNK, p38 MAPK, STAT3, and Akt signaling pathways in a DR6-dependent manner. Interacts (via N-terminus) with host CIDEB (via N-terminus); this interaction seems to regulate the association of HCV particles with APOE. Interacts with host CHKA/Choline Kinase-alpha; CHKA bridges host PI4KA and NS5A and potentiates NS5A-stimulated PI4KA activity, which then facilitates the targeting of the ternary complex to the ER for viral replication. Interacts with host SPSB2 (via C-terminus); this interaction targets NS5A for ubiquitination and degradation. Interacts with host RAB18; this interaction may promote the association of NS5A and other replicase components with lipid droplets. Interacts (via region D2) with host PPIA/CYPA; the interaction stimulates RNA-binding ability of NS5A and is dependent on the peptidyl-prolyl cis-trans isomerase activity of PPIA/CYPA. Interacts with host TRIM14; this interaction induces the degradation of NS5A. In terms of assembly, homooligomer. Interacts with non-structural protein 5A. Interacts with host VAPB. Interacts with host PRK2/PKN2. Interacts with host HNRNPA1 and SEPT6; these interactions facilitate viral replication. Part of the replication complex composed of NS2, NS3, NS4A, NS4B, NS5A and the RNA-directed RNA polymerase. Zn(2+) is required as a cofactor. Requires Mg(2+) as cofactor. Post-translationally, specific enzymatic cleavages in vivo yield mature proteins. The structural proteins, core, E1, E2 and p7 are produced by proteolytic processing by host signal peptidases. The core protein precursor is synthesized as a 23 kDa, which is retained in the ER membrane through the hydrophobic signal peptide. Cleavage by the signal peptidase releases the 21 kDa mature core protein. The cleavage of the core protein precursor occurs between aminoacids 176 and 188 but the exact cleavage site is not known. Some degraded forms of the core protein appear as well during the course of infection. The other proteins (p7, NS2, NS3, NS4A, NS4B, NS5A and NS5B) are cleaved by the viral proteases. Autoprocessing between NS2 and NS3 is mediated by the NS2 cysteine protease catalytic domain and regulated by the NS3 N-terminal domain. Phosphorylated by host PKC and PKA. In terms of processing, ubiquitinated; mediated by UBE3A and leading to core protein subsequent proteasomal degradation. Post-translationally, highly N-glycosylated. Palmitoylation is required for NS2/3 autoprocessing and E2 recruitment to membranes. In terms of processing, palmitoylated. This modification may play a role in its polymerization or in protein-protein interactions. Post-translationally, phosphorylated on serines in a basal form termed p56. p58 is a hyperphosphorylated form of p56. p56 and p58 coexist in the cell in roughly equivalent amounts. Hyperphosphorylation is dependent on the presence of NS4A. Host CSNK1A1/CKI-alpha or RPS6KB1 kinases may be responsible for NS5A phosphorylation. Tyrosine phosphorylation is essential for the interaction with host SRC. In terms of processing, the N-terminus is phosphorylated by host PRK2/PKN2.

The protein resides in the host endoplasmic reticulum membrane. Its subcellular location is the host mitochondrion membrane. It localises to the virion. The protein localises to the host cytoplasm. It is found in the host nucleus. The protein resides in the host lipid droplet. Its subcellular location is the virion membrane. It localises to the host mitochondrion. The protein localises to the host cell membrane. It is found in the host perinuclear region. It catalyses the reaction Hydrolysis of four peptide bonds in the viral precursor polyprotein, commonly with Asp or Glu in the P6 position, Cys or Thr in P1 and Ser or Ala in P1'.. The catalysed reaction is a ribonucleoside 5'-triphosphate + H2O = a ribonucleoside 5'-diphosphate + phosphate + H(+). It carries out the reaction ATP + H2O = ADP + phosphate + H(+). The enzyme catalyses RNA(n) + a ribonucleoside 5'-triphosphate = RNA(n+1) + diphosphate. With respect to regulation, inhibited by the antiviral drug hexamethylene amiloride. Inhibition by amantadine appears to be genotype-dependent. Also inhibited by long-alkyl-chain iminosugar derivatives. Its activity is regulated as follows. Activity is up-regulated by PRK2/PKN2-mediated phosphorylation. In terms of biological role, packages viral RNA to form a viral nucleocapsid, and promotes virion budding. Participates in the viral particle production as a result of its interaction with the non-structural protein 5A. Binds RNA and may function as a RNA chaperone to induce the RNA structural rearrangements taking place during virus replication. Modulates viral translation initiation by interacting with viral IRES and 40S ribosomal subunit. Affects various cell signaling pathways, host immunity and lipid metabolism. Prevents the establishment of cellular antiviral state by blocking the interferon-alpha/beta (IFN-alpha/beta) and IFN-gamma signaling pathways and by blocking the formation of phosphorylated STAT1 and promoting ubiquitin-mediated proteasome-dependent degradation of STAT1. Activates STAT3 leading to cellular transformation. Regulates the activity of cellular genes, including c-myc and c-fos. May repress the promoter of p53, and sequester CREB3 and SP110 isoform 3/Sp110b in the cytoplasm. Represses cell cycle negative regulating factor CDKN1A, thereby interrupting an important check point of normal cell cycle regulation. Targets transcription factors involved in the regulation of inflammatory responses and in the immune response: suppresses TNF-induced NF-kappa-B activation, and activates AP-1. Binds to dendritic cells (DCs) via C1QR1, resulting in down-regulation of T-lymphocytes proliferation. Alters lipid metabolism by interacting with hepatocellular proteins involved in lipid accumulation and storage. Induces up-regulation of FAS promoter activity, and thereby contributes to the increased triglyceride accumulation in hepatocytes (steatosis). Its function is as follows. Forms a heterodimer with envelope glycoprotein E2, which mediates virus attachment to the host cell, virion internalization through clathrin-dependent endocytosis and fusion with host membrane. Fusion with the host cell is most likely mediated by both E1 and E2, through conformational rearrangements of the heterodimer required for fusion rather than a classical class II fusion mechanism. E1/E2 heterodimer binds host apolipoproteins such as APOB and APOE thereby forming a lipo-viro-particle (LVP). APOE associated to the LVP allows the initial virus attachment to cell surface receptors such as the heparan sulfate proteoglycans (HSPGs), syndecan-1 (SDC1), syndecan-1 (SDC2), the low-density lipoprotein receptor (LDLR) and scavenger receptor class B type I (SCARB1). The cholesterol transfer activity of SCARB1 allows E2 exposure and binding of E2 to SCARB1 and the tetraspanin CD81. E1/E2 heterodimer binding on CD81 activates the epithelial growth factor receptor (EGFR) signaling pathway. Diffusion of the complex E1-E2-EGFR-SCARB1-CD81 to the cell lateral membrane allows further interaction with Claudin 1 (CLDN1) and occludin (OCLN) to finally trigger HCV entry. Functionally, forms a heterodimer with envelope glycoprotein E1, which mediates virus attachment to the host cell, virion internalization through clathrin-dependent endocytosis and fusion with host membrane. Fusion with the host cell is most likely mediated by both E1 and E2, through conformational rearrangements of the heterodimer required for fusion rather than a classical class II fusion mechanism. The interaction between envelope glycoprotein E2 and host apolipoprotein E/APOE allows the proper assembly, maturation and infectivity of the viral particles. This interaction is probably promoted via the up-regulation of cellular autophagy by the virus. E1/E2 heterodimer binds host apolipoproteins such as APOB and APOE thereby forming a lipo-viro-particle (LVP). APOE associated to the LVP allows the initial virus attachment to cell surface receptors such as the heparan sulfate proteoglycans (HSPGs), syndecan-1 (SDC1), syndecan-1 (SDC2), the low-density lipoprotein receptor (LDLR) and scavenger receptor class B type I (SCARB1). The cholesterol transfer activity of SCARB1 allows E2 exposure and binding of E2 to SCARB1 and the tetraspanin CD81. E1/E2 heterodimer binding on CD81 activates the epithelial growth factor receptor (EGFR) signaling pathway. Diffusion of the complex E1-E2-EGFR-SCARB1-CD81 to the cell lateral membrane allows further interaction with Claudin 1 (CLDN1) and occludin (OCLN) to finally trigger HCV entry. Inhibits host EIF2AK2/PKR activation, preventing the establishment of an antiviral state. Viral ligand for CD209/DC-SIGN and CLEC4M/DC-SIGNR, which are respectively found on dendritic cells (DCs), and on liver sinusoidal endothelial cells and macrophage-like cells of lymph node sinuses. These interactions allow the capture of circulating HCV particles by these cells and subsequent facilitated transmission to permissive cells such as hepatocytes and lymphocyte subpopulations. The interaction between E2 and host amino acid transporter complex formed by SLC3A2 and SLC7A5/LAT1 may facilitate viral entry into host cell. Ion channel protein that acts as a viroporin and plays an essential role in the assembly, envelopment and secretion of viral particles. Regulates the host cell secretory pathway, which induces the intracellular retention of viral glycoproteins and favors assembly of viral particles. Creates a pore in acidic organelles and releases Ca(2+) and H(+) in the cytoplasm of infected cells, leading to a productive viral infection. High levels of cytoplasmic Ca(2+) may trigger membrane trafficking and transport of viral ER-associated proteins to viroplasms, sites of viral genome replication. This ionic imbalance induces the assembly of the inflammasome complex, which triggers the maturation of pro-IL-1beta into IL-1beta through the action of caspase-1. Targets also host mitochondria and induces mitochondrial depolarization. In addition of its role as a viroporin, acts as a lipid raft adhesion factor. In terms of biological role, cysteine protease required for the proteolytic auto-cleavage between the non-structural proteins NS2 and NS3. The N-terminus of NS3 is required for the function of NS2 protease (active region NS2-3). Promotes the initiation of viral particle assembly by mediating the interaction between structural and non-structural proteins. Its function is as follows. Displays three enzymatic activities: serine protease with a chymotrypsin-like fold, NTPase and RNA helicase. NS3 serine protease, in association with NS4A, is responsible for the cleavages of NS3-NS4A, NS4A-NS4B, NS4B-NS5A and NS5A-NS5B. The NS3/NS4A complex prevents phosphorylation of host IRF3, thus preventing the establishment of dsRNA induced antiviral state. The NS3/NS4A complex induces host amino acid transporter component SLC3A2, thus contributing to HCV propagation. NS3 RNA helicase binds to RNA and unwinds both dsDNA and dsRNA in the 3' to 5' direction, and likely resolves RNA complicated stable secondary structures in the template strand. Binds a single ATP and catalyzes the unzipping of a single base pair of dsRNA. Inhibits host antiviral proteins TBK1 and IRF3 thereby preventing the establishment of an antiviral state. Cleaves host MAVS/CARDIF thereby preventing the establishment of an antiviral state. Cleaves host TICAM1/TRIF, thereby disrupting TLR3 signaling and preventing the establishment of an antiviral state. Functionally, induces a specific membrane alteration that serves as a scaffold for the virus replication complex. This membrane alteration gives rise to the so-called ER-derived membranous web that contains the replication complex. NS4B self-interaction contributes to its function in membranous web formation. Promotes host TRIF protein degradation in a CASP8-dependent manner thereby inhibiting host TLR3-mediated interferon signaling. Disrupts the interaction between STING and TBK1 contributing to the inhibition of interferon signaling. Phosphorylated protein that is indispensable for viral replication and assembly. Both hypo- and hyperphosphorylated states are required for the viral life cycle. The hyperphosphorylated form of NS5A is an inhibitor of viral replication. Involved in RNA-binding and especially in binding to the viral genome. Zinc is essential for RNA-binding. Participates in the viral particle production as a result of its interaction with the mature viral core protein. Its interaction with host VAPB may target the viral replication complex to vesicles. Down-regulates viral IRES translation initiation. Mediates interferon resistance, presumably by interacting with and inhibiting host EIF2AK2/PKR. Prevents BIN1-induced apoptosis. Acts as a transcriptional activator of some host genes important for viral replication when localized in the nucleus. Via the interaction with host PACSIN2, modulates lipid droplet formation in order to promote virion assembly. Modulates TNFRSF21/DR6 signaling pathway for viral propagation. In terms of biological role, RNA-dependent RNA polymerase that performs primer-template recognition and RNA synthesis during viral replication. Initiates RNA transcription/replication at a flavin adenine dinucleotide (FAD), resulting in a 5'- FAD cap on viral RNAs. In this way, recognition of viral 5' RNA by host pattern recognition receptors can be bypassed, thereby evading activation of antiviral pathways. In Homo sapiens (Human), this protein is Genome polyprotein.